The primary structure comprises 333 residues: Na(+)-translocating ferredoxin:NAD(+) oxidoreductase complex subunit B (333 aa).

Residues 1 to 27 (MLNAILVPVGILGVFGLIFGIGLAIAA) form a hydrophobic region. The 4Fe-4S domain occupies 33–92 (YEDPRVPLVRAALPGANCGGCGLPGCDALAANIVGGSAAIDACPVGGASCAAAVAEIMGM). [4Fe-4S] cluster is bound by residues Cys50, Cys53, Cys58, Cys75, Cys138, Cys142, Cys148, Cys152, Cys172, Cys175, Cys178, Cys182, Cys217, Cys220, Cys223, Cys227, Cys246, Cys249, Cys252, Cys256, Cys279, Cys282, Cys285, Cys289, Cys310, Cys313, Cys316, and Cys320. 6 4Fe-4S ferredoxin-type domains span residues 126–162 (REAM…IGED), 163–192 (GLPK…LVPE), 207–237 (KIAR…VENN), 239–266 (AKID…GDVE), 270–299 (STAY…GEIK), and 301–330 (PPYV…MRPN).

It belongs to the 4Fe4S bacterial-type ferredoxin family. RnfB subfamily. As to quaternary structure, the complex is composed of six subunits: RnfA, RnfB, RnfC, RnfD, RnfE and RnfG. Requires [4Fe-4S] cluster as cofactor.

It localises to the cell membrane. The enzyme catalyses 2 reduced [2Fe-2S]-[ferredoxin] + Na(+)(in) + NAD(+) + H(+) = 2 oxidized [2Fe-2S]-[ferredoxin] + Na(+)(out) + NADH. In terms of biological role, part of a membrane-bound complex that couples electron transfer with translocation of ions across the membrane. Couples electron transfer from reduced ferredoxin to NAD(+) with electrogenic movement of Na(+) out of the cell. Involved in caffeate respiration. The chain is Na(+)-translocating ferredoxin:NAD(+) oxidoreductase complex subunit B from Acetobacterium woodii (strain ATCC 29683 / DSM 1030 / JCM 2381 / KCTC 1655 / WB1).